A 562-amino-acid chain; its full sequence is Glucocorticoid modulatory element-binding protein 1 (562 aa).

Position 2 is an N-acetylalanine (alanine 2). An SAND domain is found at 72–156; it reads ASSIEGNEDM…RKMMDSGQID (85 aa). Residue cysteine 103 participates in Zn(2+) binding. 4 residues coordinate DNA: lysine 129, lysine 133, lysine 136, and arginine 147. Zn(2+)-binding residues include histidine 160, cysteine 164, and cysteine 168. Positions 311–355 form a coiled coil; the sequence is LDNRRKQVEQGEEQFLYTLADLERQLEEQKKQAQDPRLKSQTVQN. The disordered stretch occupies residues 360 to 384; that stretch reads PVSTPKPPKRPRLQRPASTTVLSPS. The segment covering 375–384 has biased composition (polar residues); it reads PASTTVLSPS.

Homodimer, and heterodimer of GMEB1 and GMEB2. Interacts with TRIM63. Interacts with the glucocorticoid receptor (NR3C1) and NCOA2/TIF2. May interact with HSP27 and CREB-binding protein (CBP). As to expression, ubiquitous. Low levels were detected in heart, brain, spleen, lung, liver, skeletal muscle, kidney and testis.

The protein localises to the nucleus. It localises to the cytoplasm. In terms of biological role, trans-acting factor that binds to glucocorticoid modulatory elements (GME) present in the TAT (tyrosine aminotransferase) promoter and increases sensitivity to low concentrations of glucocorticoids. Also binds to the transferrin receptor promoter. The protein is Glucocorticoid modulatory element-binding protein 1 (Gmeb1) of Mus musculus (Mouse).